A 209-amino-acid chain; its full sequence is Uracil phosphoribosyltransferase (209 aa).

5-phospho-alpha-D-ribose 1-diphosphate contacts are provided by residues arginine 79, arginine 104, and 131 to 139 (DPMLATGNS). Uracil-binding positions include isoleucine 194 and 199-201 (GDA). Aspartate 200 provides a ligand contact to 5-phospho-alpha-D-ribose 1-diphosphate.

The protein belongs to the UPRTase family. It depends on Mg(2+) as a cofactor.

The catalysed reaction is UMP + diphosphate = 5-phospho-alpha-D-ribose 1-diphosphate + uracil. The protein operates within pyrimidine metabolism; UMP biosynthesis via salvage pathway; UMP from uracil: step 1/1. With respect to regulation, allosterically activated by GTP. Functionally, catalyzes the conversion of uracil and 5-phospho-alpha-D-ribose 1-diphosphate (PRPP) to UMP and diphosphate. The sequence is that of Uracil phosphoribosyltransferase from Rhodococcus jostii (strain RHA1).